The sequence spans 591 residues: Aspartate--tRNA(Asp/Asn) ligase (591 aa).

An L-aspartate-binding site is contributed by Glu175. Positions 199 to 202 (QQFK) are aspartate. The L-aspartate site is built by Arg221 and His453. 221 to 223 (RDE) serves as a coordination point for ATP. Position 486 (Glu486) interacts with ATP. Arg493 lines the L-aspartate pocket. 538-541 (GIDR) serves as a coordination point for ATP.

This sequence belongs to the class-II aminoacyl-tRNA synthetase family. Type 1 subfamily. In terms of assembly, homodimer.

It localises to the cytoplasm. The enzyme catalyses tRNA(Asx) + L-aspartate + ATP = L-aspartyl-tRNA(Asx) + AMP + diphosphate. Aspartyl-tRNA synthetase with relaxed tRNA specificity since it is able to aspartylate not only its cognate tRNA(Asp) but also tRNA(Asn). Reaction proceeds in two steps: L-aspartate is first activated by ATP to form Asp-AMP and then transferred to the acceptor end of tRNA(Asp/Asn). In Jannaschia sp. (strain CCS1), this protein is Aspartate--tRNA(Asp/Asn) ligase.